A 146-amino-acid chain; its full sequence is Leptin (146 aa).

A disulfide bond links Cys96 and Cys146.

This sequence belongs to the leptin family.

The protein resides in the secreted. Functionally, key player in the regulation of energy balance and body weight control. Once released into the circulation, has central and peripheral effects by binding LEPR, found in many tissues, which results in the activation of several major signaling pathways. In the hypothalamus, acts as an appetite-regulating factor that induces a decrease in food intake and an increase in energy consumption by inducing anorexinogenic factors and suppressing orexigenic neuropeptides, also regulates bone mass and secretion of hypothalamo-pituitary-adrenal hormones. In the periphery, increases basal metabolism, influences reproductive function, regulates pancreatic beta-cell function and insulin secretion, is pro-angiogenic for endothelial cell and affects innate and adaptive immunity. In the arcuate nucleus of the hypothalamus, activates by depolarization POMC neurons inducing FOS and SOCS3 expression to release anorexigenic peptides and inhibits by hyperpolarization NPY neurons inducing SOCS3 with a consequent reduction on release of orexigenic peptides. In addition to its known satiety inducing effect, has a modulatory role in nutrient absorption. In the intestine, reduces glucose absorption by enterocytes by activating PKC and leading to a sequential activation of p38, PI3K and ERK signaling pathways which exerts an inhibitory effect on glucose absorption. Acts as a growth factor on certain tissues, through the activation of different signaling pathways increases expression of genes involved in cell cycle regulation such as CCND1, via JAK2-STAT3 pathway, or VEGFA, via MAPK1/3 and PI3K-AKT1 pathways. May also play an apoptotic role via JAK2-STAT3 pathway and up-regulation of BIRC5 expression. Pro-angiogenic, has mitogenic activity on vascular endothelial cells and plays a role in matrix remodeling by regulating the expression of matrix metalloproteinases (MMPs) and tissue inhibitors of metalloproteinases (TIMPs). In innate immunity, modulates the activity and function of neutrophils by increasing chemotaxis and the secretion of oxygen radicals. Increases phagocytosis by macrophages and enhances secretion of pro-inflammatory mediators. Increases cytotoxic ability of NK cells. Plays a pro-inflammatory role, in synergy with IL1B, by inducing NOS2 which promotes the production of IL6, IL8 and Prostaglandin E2, through a signaling pathway that involves JAK2, PI3K, MAP2K1/MEK1 and MAPK14/p38. In adaptive immunity, promotes the switch of memory T-cells towards T helper-1 cell immune responses. Increases CD4(+)CD25(-) T-cell proliferation and reduces autophagy during TCR (T-cell receptor) stimulation, through MTOR signaling pathway activation and BCL2 up-regulation. This chain is Leptin (LEP), found in Gorilla gorilla gorilla (Western lowland gorilla).